The primary structure comprises 216 residues: Uracil phosphoribosyltransferase (216 aa).

5-phospho-alpha-D-ribose 1-diphosphate is bound by residues R85, R110, and D135–S143. Residues I200 and G205–A207 contribute to the uracil site. Residue D206 participates in 5-phospho-alpha-D-ribose 1-diphosphate binding.

It belongs to the UPRTase family. Requires Mg(2+) as cofactor.

It carries out the reaction UMP + diphosphate = 5-phospho-alpha-D-ribose 1-diphosphate + uracil. It participates in pyrimidine metabolism; UMP biosynthesis via salvage pathway; UMP from uracil: step 1/1. Allosterically activated by GTP. Functionally, catalyzes the conversion of uracil and 5-phospho-alpha-D-ribose 1-diphosphate (PRPP) to UMP and diphosphate. This Burkholderia multivorans (strain ATCC 17616 / 249) protein is Uracil phosphoribosyltransferase.